The following is a 122-amino-acid chain: Zein-alpha B49 (122 aa).

This sequence belongs to the zein family.

Functionally, zeins are major seed storage proteins. This chain is Zein-alpha B49, found in Zea mays (Maize).